A 1161-amino-acid polypeptide reads, in one-letter code: PAN2-PAN3 deadenylation complex catalytic subunit pan2 (1161 aa).

3 WD repeats span residues 20-59 (GLPT…RYTS), 102-145 (AHEE…DKLQ), and 276-315 (ANVS…HFNE). The segment at 316–452 (MSKEVEFADV…GAKLNGEAED (137 aa)) is linker. Positions 453-822 (DPLLKYSNVE…IPCVLAYQAR (370 aa)) constitute a USP domain. Positions 871–1049 (VALDTEFVDL…VEDARMALRL (179 aa)) constitute an Exonuclease domain. A divalent metal cation-binding residues include Asp-874, Glu-876, Asp-983, and Asp-1042. Positions 1094–1161 (GTAVTMQNNS…GDFFGGSPLK (68 aa)) are disordered. The span at 1097–1110 (VTMQNNSGRNTPST) shows a compositional bias: polar residues. Low complexity predominate over residues 1116 to 1129 (AAAAAATTSAPATP). Over residues 1145–1155 (TFGGPGTGDFF) the composition is skewed to gly residues.

This sequence belongs to the peptidase C19 family. PAN2 subfamily. In terms of assembly, forms a heterotrimer with an asymmetric homodimer of the regulatory subunit pan3 to form the poly(A)-nuclease (PAN) deadenylation complex. A divalent metal cation serves as cofactor.

Its subcellular location is the cytoplasm. It carries out the reaction Exonucleolytic cleavage of poly(A) to 5'-AMP.. Its activity is regulated as follows. Positively regulated by the regulatory subunit pan3. In terms of biological role, catalytic subunit of the poly(A)-nuclease (PAN) deadenylation complex, one of two cytoplasmic mRNA deadenylases involved in mRNA turnover. PAN specifically shortens poly(A) tails of RNA and the activity is stimulated by poly(A)-binding protein pab1. PAN deadenylation is followed by rapid degradation of the shortened mRNA tails by the CCR4-NOT complex. Deadenylated mRNAs are then degraded by two alternative mechanisms, namely exosome-mediated 3'-5' exonucleolytic degradation, or deadenylation-dependent mRNA decaping and subsequent 5'-3' exonucleolytic degradation by xrn1. May also be involved in post-transcriptional maturation of mRNA poly(A) tails. This Aspergillus clavatus (strain ATCC 1007 / CBS 513.65 / DSM 816 / NCTC 3887 / NRRL 1 / QM 1276 / 107) protein is PAN2-PAN3 deadenylation complex catalytic subunit pan2.